We begin with the raw amino-acid sequence, 106 residues long: uncharacterized protein (106 aa).

Residues 78–98 (LAITGYVVSIPIVLPILIIFI) form a helical membrane-spanning segment.

The protein localises to the membrane. This is an uncharacterized protein from Haemophilus influenzae (strain ATCC 51907 / DSM 11121 / KW20 / Rd).